The primary structure comprises 156 residues: UPF0523 protein C (156 aa).

The protein belongs to the UPF0523 family.

In Dictyostelium discoideum (Social amoeba), this protein is UPF0523 protein C.